We begin with the raw amino-acid sequence, 576 residues long: Eukaryotic translation initiation factor 2A (576 aa).

WD repeat units lie at residues 71–119 (LPAA…LVFS), 266–307 (DREG…VSII), 308–349 (PPAP…KKIT), and 351–396 (VEAA…MFYE). 2 disordered regions span residues 422-461 (SASL…QNST) and 475-505 (GSAN…NNKK). The span at 475-486 (GSANKHVNSSRQ) shows a compositional bias: polar residues.

The protein belongs to the WD repeat EIF2A family.

Its subcellular location is the cytoplasm. Functionally, functions in the early steps of protein synthesis of a small number of specific mRNAs. Acts by directing the binding of methionyl-tRNAi to 40S ribosomal subunits. In contrast to the eIF-2 complex, it binds methionyl-tRNAi to 40S subunits in a codon-dependent manner, whereas the eIF-2 complex binds methionyl-tRNAi to 40S subunits in a GTP-dependent manner. In Schizosaccharomyces pombe (strain 972 / ATCC 24843) (Fission yeast), this protein is Eukaryotic translation initiation factor 2A.